Here is a 287-residue protein sequence, read N- to C-terminus: Probable phosphite transport system-binding protein PtxB (287 aa).

Positions 1–23 (MKRLSALLLTCLLSAVSSLSALA) are cleaved as a signal peptide.

This sequence belongs to the phosphate/phosphite/phosphonate binding protein family.

Probably forms part of a binding-protein-dependent phosphite transporter. Required for oxidation of phosphite to phosphate. This is Probable phosphite transport system-binding protein PtxB (ptxB) from Stutzerimonas stutzeri (Pseudomonas stutzeri).